The primary structure comprises 587 residues: Cyclic di-GMP phosphodiesterase PA2567 (587 aa).

The GAF domain occupies 28–157 (DEVFEEILAA…LEHFARLVMA (130 aa)). The region spanning 192 to 327 (GALTVIAADL…GVGWARYNPP (136 aa)) is the GGDEF domain. In terms of domain architecture, EAL spans 335–587 (AFTLLTSLSQ…PEQLEDWLRR (253 aa)).

It carries out the reaction 3',3'-c-di-GMP + H2O = 5'-phosphoguanylyl(3'-&gt;5')guanosine + H(+). In terms of biological role, phosphodiesterase (PDE) that catalyzes the hydrolysis of cyclic diguanylate (c-di-GMP) to 5'-pGpG. The chain is Cyclic di-GMP phosphodiesterase PA2567 from Pseudomonas aeruginosa (strain ATCC 15692 / DSM 22644 / CIP 104116 / JCM 14847 / LMG 12228 / 1C / PRS 101 / PAO1).